The sequence spans 259 residues: Imidazole glycerol phosphate synthase subunit HisF (259 aa).

Active-site residues include Asp11 and Asp130.

This sequence belongs to the HisA/HisF family. As to quaternary structure, heterodimer of HisH and HisF.

The protein localises to the cytoplasm. It catalyses the reaction 5-[(5-phospho-1-deoxy-D-ribulos-1-ylimino)methylamino]-1-(5-phospho-beta-D-ribosyl)imidazole-4-carboxamide + L-glutamine = D-erythro-1-(imidazol-4-yl)glycerol 3-phosphate + 5-amino-1-(5-phospho-beta-D-ribosyl)imidazole-4-carboxamide + L-glutamate + H(+). The protein operates within amino-acid biosynthesis; L-histidine biosynthesis; L-histidine from 5-phospho-alpha-D-ribose 1-diphosphate: step 5/9. In terms of biological role, IGPS catalyzes the conversion of PRFAR and glutamine to IGP, AICAR and glutamate. The HisF subunit catalyzes the cyclization activity that produces IGP and AICAR from PRFAR using the ammonia provided by the HisH subunit. This is Imidazole glycerol phosphate synthase subunit HisF from Syntrophobacter fumaroxidans (strain DSM 10017 / MPOB).